Reading from the N-terminus, the 385-residue chain is Uroporphyrinogen decarboxylase (385 aa).

Substrate is bound by residues 53–57 (RQAGR), aspartate 102, tyrosine 179, serine 234, and histidine 363.

This sequence belongs to the uroporphyrinogen decarboxylase family. Homodimer.

It is found in the cytoplasm. The enzyme catalyses uroporphyrinogen III + 4 H(+) = coproporphyrinogen III + 4 CO2. The protein operates within porphyrin-containing compound metabolism; protoporphyrin-IX biosynthesis; coproporphyrinogen-III from 5-aminolevulinate: step 4/4. Catalyzes the decarboxylation of four acetate groups of uroporphyrinogen-III to yield coproporphyrinogen-III. The sequence is that of Uroporphyrinogen decarboxylase from Tropheryma whipplei (strain TW08/27) (Whipple's bacillus).